The following is a 652-amino-acid chain: Endoplasmic reticulum chaperone BiP (652 aa).

Positions 1–16 are cleaved as a signal peptide; the sequence is MRHLLLALLLLGGARA. Residues 34–37, Lys94, 225–227, 291–298, and 362–365 each bind ATP; these read GTTY, GGT, EKAKRALS, and GSTR. Residues 123-278 are nucleotide-binding (NBD); sequence KPHIQVDVGG…KKKTGKDVRK (156 aa). The interval 407–417 is interdomain linker; the sequence is QDTGDLVLLDV. A substrate-binding (SBD) region spans residues 418–498; it reads CPLTLGIETV…PRGVPQIEVT (81 aa). The segment at 630-652 is disordered; that stretch reads SKLYGSAGPPPTGEEEAAEKDEL. Residues 642–652 are compositionally biased toward acidic residues; that stretch reads GEEEAAEKDEL. Positions 649 to 652 match the Prevents secretion from ER motif; the sequence is KDEL.

Belongs to the heat shock protein 70 family. In terms of assembly, monomer and homooligomer; homooligomerization via the interdomain linker inactivates the chaperone activity and acts as a storage of HSPA5/BiP molecules. Interacts with DNAJC10. Interacts with DNAJB9/ERdj4; leading to recruit HSPA5/BiP to ERN1/IRE1. Interacts with ERN1/IRE1; interaction takes place following interaction with DNAJB9/ERdj4 and leads to inactivate ERN1/IRE1.

The protein resides in the endoplasmic reticulum lumen. The protein localises to the melanosome. It is found in the cytoplasm. It localises to the cell surface. It carries out the reaction ATP + H2O = ADP + phosphate + H(+). The chaperone activity is regulated by ATP-induced allosteric coupling of the nucleotide-binding (NBD) and substrate-binding (SBD) domains. In the ADP-bound and nucleotide-free (apo) states, the two domains have little interaction. In contrast, in the ATP-bound state the two domains are tightly coupled, which results in drastically accelerated kinetics in both binding and release of polypeptide substrates. J domain-containing co-chaperones (DNAJB9/ERdj4 or DNAJC10/ERdj5) stimulate the ATPase activity and are required for efficient substrate recognition by HSPA5/BiP. Homooligomerization inactivates participating HSPA5/BiP protomers and probably act as reservoirs to store HSPA5/BiP molecules when they are not needed by the cell. In terms of biological role, endoplasmic reticulum chaperone that plays a key role in protein folding and quality control in the endoplasmic reticulum lumen. Involved in the correct folding of proteins and degradation of misfolded proteins via its interaction with DNAJC10/ERdj5, probably to facilitate the release of DNAJC10/ERdj5 from its substrate. Acts as a key repressor of the EIF2AK3/PERK and ERN1/IRE1-mediated unfolded protein response (UPR). In the unstressed endoplasmic reticulum, recruited by DNAJB9/ERdj4 to the luminal region of ERN1/IRE1, leading to disrupt the dimerization of ERN1/IRE1, thereby inactivating ERN1/IRE1. Also binds and inactivates EIF2AK3/PERK in unstressed cells. Accumulation of misfolded protein in the endoplasmic reticulum causes release of HSPA5/BiP from ERN1/IRE1 and EIF2AK3/PERK, allowing their homodimerization and subsequent activation. May also play a role in apoptosis and cell proliferation. This is Endoplasmic reticulum chaperone BiP from Gallus gallus (Chicken).